An 881-amino-acid polypeptide reads, in one-letter code: Dynamin-like GTPase MGM1, mitochondrial (881 aa).

The transit peptide at 1-59 (MNASPVRLLILRRQLATHPAILYSSPYIKSPLVHLHSRMSNVHRSAHANALSFVITRRS) directs the protein to the mitochondrion. The Mitochondrial matrix segment spans residues 60–72 (ISHFPKIISKIIR). A helical; Signal-anchor for type II membrane protein membrane pass occupies residues 73-92 (LPIYVGGGMAAAGSYIAYKM). At 93–881 (EEASSFTKDK…KSYKGVSKNL (789 aa)) the chain is on the mitochondrial intermembrane side. Positions 145–183 (ATSLDDDESKRQGDPKDDDDEDDDDEDDENDSVDTTQDE) are disordered. Acidic residues predominate over residues 160 to 176 (KDDDDEDDDDEDDENDS). A Dynamin-type G domain is found at 207 to 505 (HLTLPSIVVI…LEISMSNALE (299 aa)). Residues 217–224 (GSQSSGKS) are G1 motif. Ser220, Ser221, Gly222, Lys223, Ser224, Ser225, and Gly239 together coordinate GTP. Position 224 (Ser224) interacts with Mg(2+). The interval 243-245 (VTR) is G2 motif. 2 residues coordinate Mg(2+): Thr244 and Asp317. The G3 motif stretch occupies residues 317–320 (DLPG). A G4 motif region spans residues 385-388 (TKLD). Residues Lys386, Asp388, and Thr415 each contribute to the GTP site. The tract at residues 414–417 (ITKT) is G5 motif. Positions 668-780 (STADQVENCI…KMLKNKCHST (113 aa)) are paddle region. Cys777 and Cys786 form a disulfide bridge. Residues 780–872 (TIEKDRCPEV…KIDSILVFKK (93 aa)) enclose the GED domain.

The protein belongs to the TRAFAC class dynamin-like GTPase superfamily. Dynamin/Fzo/YdjA family. Oligomeric complex consisting of membrane-bound and soluble forms of MGM1. Associates with FZO1 through interaction with the intermembrane space domain of UGO1 which binds FZO1 through its cytoplasmic domain. Post-translationally, cleavage of the transit peptide by mitochondrial processing protease (MPP) produces a long integral membrane form of MGM1 (l-MGM1). Further processing by the rhomboid protease PCP1 produces a short peripheral membrane form of MGM1 (s-MGM1). Both isoforms are required for full activity.

It is found in the mitochondrion inner membrane. The protein resides in the mitochondrion intermembrane space. The enzyme catalyses GTP + H2O = GDP + phosphate + H(+). Functionally, dynamin-related GTPase that is essential for normal mitochondrial morphology by mediating fusion of the mitochondrial inner membranes, regulating cristae morphology and maintaining respiratory chain function. Exists in two forms: the transmembrane, long form (Dynamin-like GTPase MGM1, long form; L-MGM1), which is tethered to the inner mitochondrial membrane, and the short soluble form (Dynamin-like GTPase MGM1, short form; S-MGM1), which results from proteolytic cleavage and localizes in the intermembrane space. Both forms (L-MGM1 and S-MGM1) cooperate to catalyze the fusion of the mitochondrial inner membrane. The equilibrium between L-MGM1 and S-MGM1 is essential: excess levels of S-MGM1, following loss of mitochondrial membrane potential, lead to an impaired equilibrium between L-MGM1 and S-MGM1, inhibiting mitochondrial fusion. Plays a role in the maintenance and remodeling of mitochondrial cristae, some invaginations of the mitochondrial inner membrane that provide an increase in the surface area. Probably acts by forming helical filaments at the inside of inner membrane tubes with the shape and dimensions of crista junctions. In terms of biological role, constitutes the transmembrane long form (L-MGM1) that plays a central role in mitochondrial inner membrane fusion and cristae morphology. L-MGM1 and the soluble short form (S-MGM1) form higher-order helical assemblies that coordinate the fusion of mitochondrial inner membranes. Inner membrane-anchored L-MGM1 molecules initiate membrane remodeling by recruiting soluble S-MGM1 to rapidly polymerize into a flexible cylindrical scaffold encaging the mitochondrial inner membrane. Once at the membrane surface, the formation of S-MGM1 helices induce bilayer curvature. MGM1 dimerization through the paddle region, which inserts into cardiolipin-containing membrane, promotes GTP hydrolysis and the helical assembly of a flexible MGM1 lattice on the membrane, which drives membrane curvature and mitochondrial fusion. Constitutes the soluble short form (S-MGM1) generated by cleavage by PCP1, which plays a central role in mitochondrial inner membrane fusion and cristae morphology. The transmembrane long form (L-MGM1) and the S-MGM1 form higher-order helical assemblies that coordinate the fusion of mitochondrial inner membranes. Inner membrane-anchored L-MGM1 molecules initiate membrane remodeling by recruiting soluble S-MGM1 to rapidly polymerize into a flexible cylindrical scaffold encaging the mitochondrial inner membrane. Once at the membrane surface, the formation of S-MGM1 helices induce bilayer curvature. MGM1 dimerization through the paddle region, which inserts into cardiolipin-containing membrane, promotes GTP hydrolysis and the helical assembly of a flexible MGM1 lattice on the membrane, which drives membrane curvature and mitochondrial fusion. Excess levels of S-MGM1 produced by cleavage by PCP1 following stress conditions that induce loss of mitochondrial membrane potential, lead to an impaired equilibrium between L-MGM1 and S-MGM1, thereby inhibiting mitochondrial fusion. The protein is Dynamin-like GTPase MGM1, mitochondrial of Saccharomyces cerevisiae (strain ATCC 204508 / S288c) (Baker's yeast).